Reading from the N-terminus, the 90-residue chain is Probable Fe(2+)-trafficking protein (90 aa).

Belongs to the Fe(2+)-trafficking protein family. In terms of assembly, monomer.

In terms of biological role, could be a mediator in iron transactions between iron acquisition and iron-requiring processes, such as synthesis and/or repair of Fe-S clusters in biosynthetic enzymes. In Sodalis glossinidius (strain morsitans), this protein is Probable Fe(2+)-trafficking protein.